The chain runs to 295 residues: Lipoyl synthase (295 aa).

Residues cysteine 34, cysteine 39, cysteine 45, cysteine 60, cysteine 64, cysteine 67, and serine 273 each coordinate [4Fe-4S] cluster. Positions 46 to 262 (WNKRHATIMI…KLMAYAKGFS (217 aa)) constitute a Radical SAM core domain.

The protein belongs to the radical SAM superfamily. Lipoyl synthase family. [4Fe-4S] cluster serves as cofactor.

It localises to the cytoplasm. It catalyses the reaction [[Fe-S] cluster scaffold protein carrying a second [4Fe-4S](2+) cluster] + N(6)-octanoyl-L-lysyl-[protein] + 2 oxidized [2Fe-2S]-[ferredoxin] + 2 S-adenosyl-L-methionine + 4 H(+) = [[Fe-S] cluster scaffold protein] + N(6)-[(R)-dihydrolipoyl]-L-lysyl-[protein] + 4 Fe(3+) + 2 hydrogen sulfide + 2 5'-deoxyadenosine + 2 L-methionine + 2 reduced [2Fe-2S]-[ferredoxin]. It functions in the pathway protein modification; protein lipoylation via endogenous pathway; protein N(6)-(lipoyl)lysine from octanoyl-[acyl-carrier-protein]: step 2/2. Catalyzes the radical-mediated insertion of two sulfur atoms into the C-6 and C-8 positions of the octanoyl moiety bound to the lipoyl domains of lipoate-dependent enzymes, thereby converting the octanoylated domains into lipoylated derivatives. The sequence is that of Lipoyl synthase from Anaplasma marginale (strain St. Maries).